A 146-amino-acid chain; its full sequence is Hemoglobin subunit beta (146 aa).

Val1 is subject to N-acetylvaline. The region spanning 2–146 is the Globin domain; it reads HLTAEEKSLV…VANALAHKYH (145 aa). Ser44 is subject to Phosphoserine. Lys59 carries the post-translational modification N6-acetyllysine. His63 is a heme b binding site. Lys82 is subject to N6-acetyllysine. His92 lines the heme b pocket. Cys93 carries the post-translational modification S-nitrosocysteine. Lys144 is subject to N6-acetyllysine.

This sequence belongs to the globin family. In terms of assembly, heterotetramer of two alpha chains and two beta chains. As to expression, red blood cells.

Functionally, involved in oxygen transport from the lung to the various peripheral tissues. In Canis latrans (Coyote), this protein is Hemoglobin subunit beta (HBB).